Here is a 364-residue protein sequence, read N- to C-terminus: Coproporphyrin III ferrochelatase (364 aa).

Residues Arg-29 and Tyr-118 each contribute to the Fe-coproporphyrin III site. Fe(2+) is bound by residues His-169 and Glu-250.

It belongs to the ferrochelatase family.

It localises to the cytoplasm. The catalysed reaction is Fe-coproporphyrin III + 2 H(+) = coproporphyrin III + Fe(2+). The protein operates within porphyrin-containing compound metabolism; protoheme biosynthesis. In terms of biological role, involved in coproporphyrin-dependent heme b biosynthesis. Catalyzes the insertion of ferrous iron into coproporphyrin III to form Fe-coproporphyrin III. The sequence is that of Coproporphyrin III ferrochelatase from Streptococcus pneumoniae (strain ATCC 700669 / Spain 23F-1).